The following is a 648-amino-acid chain: Threonine--tRNA ligase (648 aa).

In terms of domain architecture, TGS spans 1–61; that stretch reads MIKITLPDGS…TTDGNLILYT (61 aa). The catalytic stretch occupies residues 240-539; it reads DHRKLGKELE…LLEHTAGNFP (300 aa). C335, H386, and H516 together coordinate Zn(2+).

It belongs to the class-II aminoacyl-tRNA synthetase family. Homodimer. It depends on Zn(2+) as a cofactor.

Its subcellular location is the cytoplasm. The enzyme catalyses tRNA(Thr) + L-threonine + ATP = L-threonyl-tRNA(Thr) + AMP + diphosphate + H(+). Its function is as follows. Catalyzes the attachment of threonine to tRNA(Thr) in a two-step reaction: L-threonine is first activated by ATP to form Thr-AMP and then transferred to the acceptor end of tRNA(Thr). Also edits incorrectly charged L-seryl-tRNA(Thr). The protein is Threonine--tRNA ligase of Flavobacterium johnsoniae (strain ATCC 17061 / DSM 2064 / JCM 8514 / BCRC 14874 / CCUG 350202 / NBRC 14942 / NCIMB 11054 / UW101) (Cytophaga johnsonae).